Consider the following 151-residue polypeptide: Superoxide dismutase [Cu-Zn] A (151 aa).

C6 carries the S-palmitoyl cysteine lipid modification. H45, H47, and H62 together coordinate Cu cation. A disulfide bridge connects residues C56 and C144. 4 residues coordinate Zn(2+): H62, H70, H79, and D82. Position 118 (H118) interacts with Cu cation.

This sequence belongs to the Cu-Zn superoxide dismutase family. In terms of assembly, homodimer, and heterodimer of Superoxide dismutase [Cu-Zn] A and B. Requires Cu cation as cofactor. Zn(2+) is required as a cofactor.

The protein localises to the cytoplasm. Its subcellular location is the nucleus. It catalyses the reaction 2 superoxide + 2 H(+) = H2O2 + O2. Its function is as follows. Destroys radicals which are normally produced within the cells and which are toxic to biological systems. This chain is Superoxide dismutase [Cu-Zn] A (sod1-a), found in Xenopus laevis (African clawed frog).